Consider the following 1329-residue polypeptide: Putative protein tag-53 (1329 aa).

In terms of domain architecture, EGF-like 1 spans 65–92 (SCDKPCYNGVCLNKACVCSKGWYGSQCD). Cystine bridges form between C66/C75, C70/C80, C82/C91, C94/C120, and C144/C166. Residues 94 to 203 (CFGRIRISDN…NGFNVSYESN (110 aa)) enclose the CUB domain. A glycan (N-linked (GlcNAc...) asparagine) is linked at N103. 2 N-linked (GlcNAc...) asparagine glycosylation sites follow: N197 and N208. 2 EGF-like domains span residues 204-232 (RCAYNCSNHGSCLNGKCDCEDGYKGLNCE) and 235-270 (VCQLSGKSTESPCHEGQCVDGRCECLSARVHGETCQ). 6 disulfides stabilise this stretch: C205/C215, C209/C220, C222/C231, C236/C252, C247/C257, and C259/C269. Kelch repeat units follow at residues 302 to 353 (VVWS…KYKN), 355 to 408 (LYMF…VAGH), 416 to 463 (EMFV…AVEY), 471 to 518 (AILV…YLNG), 520 to 575 (MVVV…VIGQ), and 577 to 619 (LYAL…KCVF). Residues N324, N395, N447, N481, N529, and N555 are each glycosylated (N-linked (GlcNAc...) asparagine). N-linked (GlcNAc...) asparagine glycosylation is present at N820. N832 carries N-linked (GlcNAc...) asparagine; atypical glycosylation. N-linked (GlcNAc...) asparagine glycosylation is found at N833 and N934. Intrachain disulfides connect C945-C953, C947-C968, C971-C980, C983-C997, C1000-C1009, C1002-C1016, C1018-C1028, and C1031-C1045. Laminin EGF-like domains are found at residues 945-999 (CQCN…VCSP) and 1000-1047 (CDCH…PCFY). Positions 952 to 998 (TCFTSVGSFPPVTIEKCQSCQNHTTGAHCERCAPGFYGDARNGGVCS) constitute an EGF-like 4 domain. N973 carries an N-linked (GlcNAc...) asparagine glycan. N-linked (GlcNAc...) asparagine glycans are attached at residues N1066, N1102, and N1147. A helical membrane pass occupies residues 1176–1196 (VLFFVIFAACFIVLLVVAGLL). At 1197-1329 (WMIKVRIEAY…TIRQRPNNND (133 aa)) the chain is on the cytoplasmic side.

Its subcellular location is the membrane. This chain is Putative protein tag-53 (tag-53), found in Caenorhabditis elegans.